Consider the following 148-residue polypeptide: Large ribosomal subunit protein eL19 (148 aa).

Residues 52-76 (KPKKGISSYRSKKIAQQKKKGRRRG) are compositionally biased toward basic residues. The segment at 52-95 (KPKKGISSYRSKKIAQQKKKGRRRGPGSIKGAKGARRPKKDEWM) is disordered.

It belongs to the eukaryotic ribosomal protein eL19 family. In terms of assembly, part of the 50S ribosomal subunit.

Functionally, binds to the 23S rRNA. The polypeptide is Large ribosomal subunit protein eL19 (Methanothermobacter thermautotrophicus (strain ATCC 29096 / DSM 1053 / JCM 10044 / NBRC 100330 / Delta H) (Methanobacterium thermoautotrophicum)).